A 505-amino-acid polypeptide reads, in one-letter code: Alpha-internexin (505 aa).

The tract at residues 1–87 (MSFGSEHYLC…SQAAARTNEY (87 aa)) is head. Serine 72 carries the post-translational modification Phosphoserine. The segment at 88–129 (KIIRTNEKEQLQGLNDRFAVFIEKVHQLETQNRALEAELAAL) is coil 1A. Positions 94–407 (EKEQLQGLND…KLLEGEETRF (314 aa)) constitute an IF rod domain. The interval 130 to 142 (RQRHAEPSRVGEL) is linker 1. The interval 143 to 238 (FQRELRELRA…QVHDEEVAEL (96 aa)) is coil 1B. Position 219 is a phosphoserine (serine 219). The linker 2 stretch occupies residues 239–262 (LATLQASSQAAAEVDVAVAKPDLT). A coil 2 region spans residues 263–408 (SALREIRAQY…LLEGEETRFS (146 aa)). Residue lysine 290 is modified to N6-acetyllysine. A phosphoserine mark is found at serine 335, serine 474, and serine 502. Residues 409-505 (TSGLSISGLN…EITTSSSQKM (97 aa)) form a tail region. The segment at 438–505 (KVSSAGLSLK…EITTSSSQKM (68 aa)) is disordered. The segment covering 495–505 (EEITTSSSQKM) has biased composition (low complexity).

Belongs to the intermediate filament family. As to quaternary structure, forms homodimers (in vitro). Forms heterodimers with NEFL, NEFM or NEFH (in vitro). In terms of processing, O-glycosylated. As to expression, expressed in the dorsal root ganglion neurons (at protein level).

Functionally, class-IV neuronal intermediate filament that is able to self-assemble. It is involved in the morphogenesis of neurons. It may form an independent structural network without the involvement of other neurofilaments or it may cooperate with NEFL to form the filamentous backbone to which NEFM and NEFH attach to form the cross-bridges. May also cooperate with the neuronal intermediate filament protein PRPH to form filamentous networks. The protein is Alpha-internexin (Ina) of Rattus norvegicus (Rat).